A 216-amino-acid polypeptide reads, in one-letter code: Adenylate kinase (216 aa).

ATP is bound at residue 10-15; the sequence is GAGKGT. Residues 30-59 form an NMP region; that stretch reads STGDMFRAAMKAETELGLQAKSFIDKGALV. AMP is bound by residues Thr31, Arg36, 57-59, 85-88, and Gln92; these read ALV and GFPR. The interval 126-163 is LID; that stretch reads GRRICKECGATYHLEFNPPAKADVCDKCGGELYQRSDD. Arg127 serves as a coordination point for ATP. 2 residues coordinate Zn(2+): Cys130 and Cys133. An ATP-binding site is contributed by 136 to 137; sequence TY. Residues Cys150 and Cys153 each contribute to the Zn(2+) site. Arg160 and Arg171 together coordinate AMP. Gln199 is an ATP binding site.

This sequence belongs to the adenylate kinase family. In terms of assembly, monomer.

Its subcellular location is the cytoplasm. It carries out the reaction AMP + ATP = 2 ADP. The protein operates within purine metabolism; AMP biosynthesis via salvage pathway; AMP from ADP: step 1/1. Catalyzes the reversible transfer of the terminal phosphate group between ATP and AMP. Plays an important role in cellular energy homeostasis and in adenine nucleotide metabolism. The protein is Adenylate kinase of Bacillus cytotoxicus (strain DSM 22905 / CIP 110041 / 391-98 / NVH 391-98).